The sequence spans 195 residues: Thioredoxin reductase-like selenoprotein T (195 aa).

A signal peptide spans 1–19; the sequence is MRLLLLLLVAASAMVRSEA. Residues 46-49 constitute a cross-link (cysteinyl-selenocysteine (Cys-Sec)); that stretch reads CVSU. Residue U49 is a non-standard amino acid, selenocysteine. Residues 85–103 form a helical membrane-spanning segment; the sequence is IASFLSVFKLVLIGLIIVG.

It belongs to the SelWTH family. Selenoprotein T subfamily. In terms of processing, may contain a selenide-sulfide bond between Cys-46 and Sec-49. This bond is speculated to serve as redox-active pair. Ubiquitous. Highly expressed in the endocrine pancreas.

The protein resides in the endoplasmic reticulum membrane. It catalyses the reaction [thioredoxin]-dithiol + NADP(+) = [thioredoxin]-disulfide + NADPH + H(+). In terms of biological role, selenoprotein with thioredoxin reductase-like oxidoreductase activity. Protects dopaminergic neurons against oxidative stress and cell death. Involved in ADCYAP1/PACAP-induced calcium mobilization and neuroendocrine secretion. Plays a role in fibroblast anchorage and redox regulation. In gastric smooth muscle, modulates the contraction processes through the regulation of calcium release and MYLK activation. In pancreatic islets, involved in the control of glucose homeostasis, contributes to prolonged ADCYAP1/PACAP-induced insulin secretion. The sequence is that of Thioredoxin reductase-like selenoprotein T from Homo sapiens (Human).